We begin with the raw amino-acid sequence, 239 residues long: Probable 2-phosphosulfolactate phosphatase (239 aa).

Belongs to the ComB family. Mg(2+) serves as cofactor.

It catalyses the reaction (2R)-O-phospho-3-sulfolactate + H2O = (2R)-3-sulfolactate + phosphate. The sequence is that of Probable 2-phosphosulfolactate phosphatase from Clostridium botulinum (strain Kyoto / Type A2).